Reading from the N-terminus, the 122-residue chain is Small ribosomal subunit protein uS13 (122 aa).

The segment at 95–122 (GLPVHGQRTHTNARTRKGPRRGAVGKKK) is disordered.

It belongs to the universal ribosomal protein uS13 family. Part of the 30S ribosomal subunit. Forms a loose heterodimer with protein S19. Forms two bridges to the 50S subunit in the 70S ribosome.

Located at the top of the head of the 30S subunit, it contacts several helices of the 16S rRNA. In the 70S ribosome it contacts the 23S rRNA (bridge B1a) and protein L5 of the 50S subunit (bridge B1b), connecting the 2 subunits; these bridges are implicated in subunit movement. Contacts the tRNAs in the A and P-sites. This chain is Small ribosomal subunit protein uS13, found in Nitratidesulfovibrio vulgaris (strain DSM 19637 / Miyazaki F) (Desulfovibrio vulgaris).